The following is a 106-amino-acid chain: Pyrimidine/purine nucleoside phosphorylase (106 aa).

The protein belongs to the nucleoside phosphorylase PpnP family.

It catalyses the reaction a purine D-ribonucleoside + phosphate = a purine nucleobase + alpha-D-ribose 1-phosphate. It carries out the reaction adenosine + phosphate = alpha-D-ribose 1-phosphate + adenine. The enzyme catalyses cytidine + phosphate = cytosine + alpha-D-ribose 1-phosphate. The catalysed reaction is guanosine + phosphate = alpha-D-ribose 1-phosphate + guanine. It catalyses the reaction inosine + phosphate = alpha-D-ribose 1-phosphate + hypoxanthine. It carries out the reaction thymidine + phosphate = 2-deoxy-alpha-D-ribose 1-phosphate + thymine. The enzyme catalyses uridine + phosphate = alpha-D-ribose 1-phosphate + uracil. The catalysed reaction is xanthosine + phosphate = alpha-D-ribose 1-phosphate + xanthine. Its function is as follows. Catalyzes the phosphorolysis of diverse nucleosides, yielding D-ribose 1-phosphate and the respective free bases. Can use uridine, adenosine, guanosine, cytidine, thymidine, inosine and xanthosine as substrates. Also catalyzes the reverse reactions. This is Pyrimidine/purine nucleoside phosphorylase from Paraburkholderia xenovorans (strain LB400).